A 193-amino-acid polypeptide reads, in one-letter code: Potassium-transporting ATPase KdpC subunit (193 aa).

A helical membrane pass occupies residues 14–34 (ITFTFLVLCGLVYPLIVTGIA).

It belongs to the KdpC family. As to quaternary structure, the system is composed of three essential subunits: KdpA, KdpB and KdpC.

It is found in the cell membrane. Functionally, part of the high-affinity ATP-driven potassium transport (or Kdp) system, which catalyzes the hydrolysis of ATP coupled with the electrogenic transport of potassium into the cytoplasm. This subunit acts as a catalytic chaperone that increases the ATP-binding affinity of the ATP-hydrolyzing subunit KdpB by the formation of a transient KdpB/KdpC/ATP ternary complex. This chain is Potassium-transporting ATPase KdpC subunit, found in Bacillus cereus (strain ATCC 10987 / NRS 248).